We begin with the raw amino-acid sequence, 243 residues long: Probable transcriptional regulatory protein BDI_1233 (243 aa).

The protein belongs to the TACO1 family.

It localises to the cytoplasm. This chain is Probable transcriptional regulatory protein BDI_1233, found in Parabacteroides distasonis (strain ATCC 8503 / DSM 20701 / CIP 104284 / JCM 5825 / NCTC 11152).